Reading from the N-terminus, the 197-residue chain is Probable GTP-binding protein EngB (197 aa).

An EngB-type G domain is found at 22-197 (TGVEVAFAGR…FKEKLDTWYQ (176 aa)). GTP is bound by residues 30 to 37 (GRSNAGKS), 57 to 61 (GRTQL), 75 to 78 (DLPG), 142 to 145 (TKAD), and 177 to 179 (FSS). Ser37 and Thr59 together coordinate Mg(2+).

The protein belongs to the TRAFAC class TrmE-Era-EngA-EngB-Septin-like GTPase superfamily. EngB GTPase family. The cofactor is Mg(2+).

Functionally, necessary for normal cell division and for the maintenance of normal septation. The protein is Probable GTP-binding protein EngB of Francisella tularensis subsp. holarctica (strain FTNF002-00 / FTA).